Here is a 310-residue protein sequence, read N- to C-terminus: 4-diphosphocytidyl-2-C-methyl-D-erythritol kinase (310 aa).

K11 is a catalytic residue. P95–A105 is an ATP binding site. D137 is a catalytic residue.

This sequence belongs to the GHMP kinase family. IspE subfamily.

It catalyses the reaction 4-CDP-2-C-methyl-D-erythritol + ATP = 4-CDP-2-C-methyl-D-erythritol 2-phosphate + ADP + H(+). Its pathway is isoprenoid biosynthesis; isopentenyl diphosphate biosynthesis via DXP pathway; isopentenyl diphosphate from 1-deoxy-D-xylulose 5-phosphate: step 3/6. In terms of biological role, catalyzes the phosphorylation of the position 2 hydroxy group of 4-diphosphocytidyl-2C-methyl-D-erythritol. The protein is 4-diphosphocytidyl-2-C-methyl-D-erythritol kinase of Acaryochloris marina (strain MBIC 11017).